We begin with the raw amino-acid sequence, 248 residues long: Putative mutator protein MutT4 (248 aa).

The interval 1–64 is disordered; it reads MSDGEQAKSR…GSTRMRTVHE (64 aa). The segment covering 9 to 20 has biased composition (basic residues); the sequence is SRRRRGRRRGRR. Residues 31-44 are compositionally biased toward low complexity; the sequence is AQPAGDATPTPATA. Residues 45–57 show a composition bias toward basic residues; it reads KRSRSRSPRRGST. In terms of domain architecture, Nudix hydrolase spans 62 to 198; it reads VHETSAGGLV…DERRLAEVAD (137 aa). Mg(2+) contacts are provided by glycine 103, glutamate 118, glutamate 121, and glutamate 122. The Nudix box signature appears at 103–124; sequence GHIELGETAEQTAIREVAEETG. The interval 204-248 is disordered; sequence LQSDGPAALPPLPPSSPRRRPQTHSRARHADDSAPGQHNGPGPGP. Residues 220-230 are compositionally biased toward basic residues; the sequence is PRRRPQTHSRA.

The protein belongs to the Nudix hydrolase family. The cofactor is Mg(2+). Mn(2+) serves as cofactor.

Functionally, may be involved in the GO system responsible for removing an oxidatively damaged form of guanine (7,8-dihydro-8-oxoguanine, 8-oxo-dGTP) from DNA and the nucleotide pool. The polypeptide is Putative mutator protein MutT4 (mutT4) (Mycobacterium tuberculosis (strain CDC 1551 / Oshkosh)).